Reading from the N-terminus, the 161-residue chain is GLLPAAAPAVAYSAAPAVSHVSYSSPVVSYGAPLAAPAITSQSSNILRSFGNLGQVSTYSKTIDTPFSSVRKADIRVSNPGVRFAAAAPVAAYAAPIATAAYAAPVAHAAYAAPVAHAAYAAPVAHAAYAAPVARTIGVAYSAAPAVSHVTYTGLGASYGW.

9 consecutive repeat copies span residues 6-9, 14-17, 35-38, 87-90, 103-106, 112-115, 121-124, 130-133, and 143-146.

In terms of biological role, component of the cuticle of the pupa of Tenebrio molitor. This Tenebrio molitor (Yellow mealworm beetle) protein is Pupal cuticle protein C1B.